The following is a 347-amino-acid chain: UDP-N-acetylenolpyruvoylglucosamine reductase (347 aa).

Positions 24 to 195 constitute an FAD-binding PCMH-type domain; that stretch reads FDARARVAAR…VAVTFRLPKA (172 aa). Residue R171 is part of the active site. Residue S247 is the Proton donor of the active site. E343 is an active-site residue.

This sequence belongs to the MurB family. Requires FAD as cofactor.

It is found in the cytoplasm. The enzyme catalyses UDP-N-acetyl-alpha-D-muramate + NADP(+) = UDP-N-acetyl-3-O-(1-carboxyvinyl)-alpha-D-glucosamine + NADPH + H(+). The protein operates within cell wall biogenesis; peptidoglycan biosynthesis. Cell wall formation. In Burkholderia pseudomallei (strain 668), this protein is UDP-N-acetylenolpyruvoylglucosamine reductase.